The primary structure comprises 67 residues: MDNYSVQNFYNNDRKPLKPTTLHDGNIKKSVYEDVTYIRKLMCKEIMPGEHDHKFYNYGYNKENKYK.

This sequence belongs to the baculoviridae 8 kDa protein family.

This is an uncharacterized protein from Autographa californica nuclear polyhedrosis virus (AcMNPV).